The chain runs to 321 residues: Arabinan endo-1,5-alpha-L-arabinosidase A (321 aa).

A signal peptide spans 1-19 (MYQLLSVASVPLLASLVHG). D34 (proton acceptor) is an active-site residue. Catalysis depends on E200, which acts as the Proton donor. An N-linked (GlcNAc...) asparagine glycan is attached at N295.

The protein belongs to the glycosyl hydrolase 43 family.

It carries out the reaction Endohydrolysis of (1-&gt;5)-alpha-arabinofuranosidic linkages in (1-&gt;5)-arabinans.. The protein operates within glycan metabolism; L-arabinan degradation. Its preferred substrate is linear 1,5-alpha-L-arabinan. The enzyme activity is progressively reduced as 1,5-alpha-chains become shorter or more highly substituted. In Aspergillus niger, this protein is Arabinan endo-1,5-alpha-L-arabinosidase A (abnA).